Here is a 62-residue protein sequence, read N- to C-terminus: Photosystem II reaction center protein Z (62 aa).

2 helical membrane passes run 8–28 (SVFALIAISTLLVIGVPVALA) and 41–61 (FSGVSLWIGSVFLVGILNSFI).

The protein belongs to the PsbZ family. PSII is composed of 1 copy each of membrane proteins PsbA, PsbB, PsbC, PsbD, PsbE, PsbF, PsbH, PsbI, PsbJ, PsbK, PsbL, PsbM, PsbT, PsbY, PsbZ, Psb30/Ycf12, at least 3 peripheral proteins of the oxygen-evolving complex and a large number of cofactors. It forms dimeric complexes.

Its subcellular location is the plastid. It is found in the chloroplast thylakoid membrane. May control the interaction of photosystem II (PSII) cores with the light-harvesting antenna, regulates electron flow through the 2 photosystem reaction centers. PSII is a light-driven water plastoquinone oxidoreductase, using light energy to abstract electrons from H(2)O, generating a proton gradient subsequently used for ATP formation. The sequence is that of Photosystem II reaction center protein Z from Cryptomeria japonica (Japanese cedar).